The primary structure comprises 295 residues: Pyridoxal 5'-phosphate synthase subunit PdxS (295 aa).

Residue Asp-25 coordinates D-ribose 5-phosphate. The active-site Schiff-base intermediate with D-ribose 5-phosphate is Lys-82. A D-ribose 5-phosphate-binding site is contributed by Gly-154. Arg-166 contributes to the D-glyceraldehyde 3-phosphate binding site. D-ribose 5-phosphate is bound by residues Gly-215 and 236-237 (GS).

Belongs to the PdxS/SNZ family. In terms of assembly, in the presence of PdxT, forms a dodecamer of heterodimers.

It carries out the reaction aldehydo-D-ribose 5-phosphate + D-glyceraldehyde 3-phosphate + L-glutamine = pyridoxal 5'-phosphate + L-glutamate + phosphate + 3 H2O + H(+). It participates in cofactor biosynthesis; pyridoxal 5'-phosphate biosynthesis. Catalyzes the formation of pyridoxal 5'-phosphate from ribose 5-phosphate (RBP), glyceraldehyde 3-phosphate (G3P) and ammonia. The ammonia is provided by the PdxT subunit. Can also use ribulose 5-phosphate and dihydroxyacetone phosphate as substrates, resulting from enzyme-catalyzed isomerization of RBP and G3P, respectively. The chain is Pyridoxal 5'-phosphate synthase subunit PdxS from Bacillus cereus (strain G9842).